Here is a 262-residue protein sequence, read N- to C-terminus: Small ribosomal subunit protein uS2 (262 aa).

Positions 224–262 (GKQGQDDAQQETADDNAANETVSEDSLKNLKNSVEGKED) are disordered.

Belongs to the universal ribosomal protein uS2 family.

This Limosilactobacillus reuteri (strain DSM 20016) (Lactobacillus reuteri) protein is Small ribosomal subunit protein uS2.